The primary structure comprises 493 residues: Beta-amyrin 11-oxidase (493 aa).

Residues 7–23 (CMSAATLLVCYIFGSKF) form a helical membrane-spanning segment. Cys439 serves as a coordination point for heme.

It belongs to the cytochrome P450 family. Requires heme as cofactor. As to expression, expressed in roots and stolons. Not detected in leaves and stems.

The protein resides in the membrane. The enzyme catalyses beta-amyrin + 2 reduced [NADPH--hemoprotein reductase] + 2 O2 = 11-oxo-beta-amyrin + 2 oxidized [NADPH--hemoprotein reductase] + 3 H2O + 2 H(+). It catalyses the reaction beta-amyrin + reduced [NADPH--hemoprotein reductase] + O2 = 11alpha-hydroxy-beta-amyrin + oxidized [NADPH--hemoprotein reductase] + H2O + H(+). The catalysed reaction is 11alpha-hydroxy-beta-amyrin + reduced [NADPH--hemoprotein reductase] + O2 = 11-oxo-beta-amyrin + oxidized [NADPH--hemoprotein reductase] + 2 H2O + H(+). Functionally, involved in the biosynthesis of Glycyrrhetinic acid (GA), a natural product which exhibits anti-inflammatory activity. Catalyzes 2 successive oxidations of beta-amyrin, producing a precursor of the triterpene sweetener glycyrrhizin. Unable to use 11-deoxoglycyrrhetinic acid or ent-kaurenoic acid as substrates. The protein is Beta-amyrin 11-oxidase of Glycyrrhiza uralensis (Chinese licorice).